The sequence spans 164 residues: Cytochrome c-type biogenesis protein CcmE (164 aa).

At 1–8 (MNPRRKSR) the chain is on the cytoplasmic side. A helical; Signal-anchor for type II membrane protein membrane pass occupies residues 9 to 29 (LYLAVVVLIGIGLTTTLVLYA). Topologically, residues 30 to 164 (LRSNIDLFYT…NSTAAQGNAS (135 aa)) are periplasmic. 2 residues coordinate heme: His-130 and Tyr-134. The segment covering 131–150 (DEKYTPPEVKEAMKENHTRP) has biased composition (basic and acidic residues). Residues 131-164 (DEKYTPPEVKEAMKENHTRPAEAYNSTAAQGNAS) are disordered. Over residues 154–164 (YNSTAAQGNAS) the composition is skewed to polar residues.

The protein belongs to the CcmE/CycJ family.

It localises to the cell inner membrane. Functionally, heme chaperone required for the biogenesis of c-type cytochromes. Transiently binds heme delivered by CcmC and transfers the heme to apo-cytochromes in a process facilitated by CcmF and CcmH. This is Cytochrome c-type biogenesis protein CcmE from Yersinia enterocolitica serotype O:8 / biotype 1B (strain NCTC 13174 / 8081).